A 501-amino-acid polypeptide reads, in one-letter code: Orsellinic acid/F9775 biosynthesis cluster protein D (501 aa).

Residues 137–189 (EVTPTTEDEDDEENESENDEEEGDVDLEEQEDDNGGRQSTTVTTSPGPSAPSV) form a disordered region. A compositionally biased stretch (acidic residues) spans 142–169 (TEDEDDEENESENDEEEGDVDLEEQEDD). Residues 172 to 183 (GRQSTTVTTSPG) are compositionally biased toward polar residues.

Part of the gene cluster that mediates the biosynthesis of orsellinic acid, as well as of the cathepsin K inhibitors F9775 A and F9775 B. The non-reducing polyketide synthase orsA produces orsellinic acid by condensing acetyl-CoA with 3 malonyl-CoA units. Further modifications by the decarboxylase orsB and the tyrosinase-like protein orsC lead to the production of F9775 A and F9775 B. The functions of orsD and orsE remain unclear since only orsB and orsC are required to convert orsellinic acid into F9775 A and F9775 B. The polypeptide is Orsellinic acid/F9775 biosynthesis cluster protein D (Emericella nidulans (strain FGSC A4 / ATCC 38163 / CBS 112.46 / NRRL 194 / M139) (Aspergillus nidulans)).